Here is a 261-residue protein sequence, read N- to C-terminus: uncharacterized protein (261 aa).

5 consecutive transmembrane segments (helical) span residues 38–58, 134–154, 163–183, 195–215, and 219–239; these read FIYLILGGFGFYQPSNLITLL, YTLMVSLVAIFQCLISLLALI, ILINLSLTLNFFLLLFNTYVL, YMGLIVSYIISLLDFSALFFL, and HKSVLSVISSIFSFFLMCLKV.

It is found in the membrane. This is an uncharacterized protein from Dictyostelium discoideum (Social amoeba).